We begin with the raw amino-acid sequence, 100 residues long: Integration host factor subunit alpha (100 aa).

Belongs to the bacterial histone-like protein family. As to quaternary structure, heterodimer of an alpha and a beta chain.

Functionally, this protein is one of the two subunits of integration host factor, a specific DNA-binding protein that functions in genetic recombination as well as in transcriptional and translational control. The protein is Integration host factor subunit alpha of Cereibacter sphaeroides (strain ATCC 17023 / DSM 158 / JCM 6121 / CCUG 31486 / LMG 2827 / NBRC 12203 / NCIMB 8253 / ATH 2.4.1.) (Rhodobacter sphaeroides).